Reading from the N-terminus, the 147-residue chain is Small nuclear ribonucleoprotein-associated protein B (147 aa).

One can recognise a Sm domain in the interval methionine 1 to proline 84. Disordered stretches follow at residues aspartate 87 to arginine 106 and alanine 128 to valine 147.

This sequence belongs to the snRNP SmB/SmN family. As to quaternary structure, belongs to the 40S cdc5-associated complex (or cwf complex), a spliceosome sub-complex reminiscent of a late-stage spliceosome composed of the U2, U5 and U6 snRNAs and at least brr2, cdc5, cwf2/prp3, cwf3/syf1, cwf4/syf3, cwf5/ecm2, spp42/cwf6, cwf7/spf27, cwf8, cwf9, cwf10, cwf11, cwf12, prp45/cwf13, cwf14, cwf15, cwf16, cwf17, cwf18, cwf19, cwf20, cwf21, cwf22, cwf23, cwf24, cwf25, cwf26, cyp7/cwf27, cwf28, cwf29/ist3, lea1, msl1, prp5/cwf1, prp10, prp12/sap130, prp17, prp22, sap61, sap62, sap114, sap145, slu7, smb1, smd1, smd3, smf1, smg1 and syf2.

The protein resides in the nucleus. It is found in the cytoplasm. Functionally, plays a role in pre-mRNA splicing as a core component of the spliceosomal U1, U2, U4 and U5 small nuclear ribonucleoproteins (snRNPs), the building blocks of the spliceosome. This chain is Small nuclear ribonucleoprotein-associated protein B (smb1), found in Schizosaccharomyces pombe (strain 972 / ATCC 24843) (Fission yeast).